The primary structure comprises 408 residues: Pleckstrin homology domain-containing family O member 1 (408 aa).

The disordered stretch occupies residues 1-21 (MKKSGSGKRGPPDGNHQSAAP). The PH domain occupies 20-131 (APEKVGWVRK…WINALSSAIT (112 aa)). The interaction with capping proteins (CPs) stretch occupies residues 132-192 (RAKNRILDEV…MLTLDLIQEE (61 aa)). Residues 135–307 (NRILDEVTVE…PAQPGQLSRI (173 aa)) form an interaction with ATM, CKIP, IFP35 and NMI region. Residues 217-264 (LAGSRRRADSDRIQPSSQRASSLSRPWEKPDKGAPYTPQALKKFPSTE) are disordered. At S226 the chain carries Phosphoserine. Over residues 229 to 240 (IQPSSQRASSLS) the composition is skewed to polar residues. Residues S270 and S341 each carry the phosphoserine modification. Residues 307–408 (IQDLVARKLE…QHSQYRKSLM (102 aa)) form a negative regulator of AP-1 activity region. 2 disordered regions span residues 325 to 348 (VQGL…SESE) and 389 to 408 (TPDS…KSLM). The segment covering 389 to 401 (TPDSHLRQTSQHS) has biased composition (polar residues).

In terms of assembly, heterodimer or homodimer. Interacts with CK2 and actin capping subunits (capping protein CP-alpha and CP-beta). CKIP1 and CK2 together inhibit the activity of actin capping protein at the barbed ends of actin filaments. Interacts with ATM, IFP35, JUN, JUND, NMI and PI3K. Interacts with AKT1, AKT2 and AKT3 (each isozyme of PKB), PtdIns(3,5)P2, PtdIns(4,5)P2 and PtdIns(3,4,5)P2. C-terminal fragments could be released during apoptosis via caspase-3-dependent cleavage.

It localises to the cell membrane. The protein resides in the nucleus. The protein localises to the cytoplasm. In terms of biological role, plays a role in the regulation of the actin cytoskeleton through its interactions with actin capping protein (CP). May function to target CK2 to the plasma membrane thereby serving as an adapter to facilitate the phosphorylation of CP by protein kinase 2 (CK2). Appears to target ATM to the plasma membrane. Appears to also inhibit tumor cell growth by inhibiting AKT-mediated cell-survival. Also implicated in PI3K-regulated muscle differentiation, the regulation of AP-1 activity (plasma membrane bound AP-1 regulator that translocates to the nucleus) and the promotion of apoptosis induced by tumor necrosis factor TNF. When bound to PKB, it inhibits it probably by decreasing PKB level of phosphorylation. The sequence is that of Pleckstrin homology domain-containing family O member 1 (Plekho1) from Mus musculus (Mouse).